A 786-amino-acid polypeptide reads, in one-letter code: Endonuclease MutS2 (786 aa).

334-341 (GPNTGGKT) contributes to the ATP binding site. One can recognise a Smr domain in the interval 711–786 (LDLRGERYEN…GNGATVVYFK (76 aa)).

Belongs to the DNA mismatch repair MutS family. MutS2 subfamily. Homodimer. Binds to stalled ribosomes, contacting rRNA.

Its function is as follows. Endonuclease that is involved in the suppression of homologous recombination and thus may have a key role in the control of bacterial genetic diversity. Acts as a ribosome collision sensor, splitting the ribosome into its 2 subunits. Detects stalled/collided 70S ribosomes which it binds and splits by an ATP-hydrolysis driven conformational change. Acts upstream of the ribosome quality control system (RQC), a ribosome-associated complex that mediates the extraction of incompletely synthesized nascent chains from stalled ribosomes and their subsequent degradation. Probably generates substrates for RQC. The chain is Endonuclease MutS2 from Ligilactobacillus salivarius (strain UCC118) (Lactobacillus salivarius).